A 356-amino-acid polypeptide reads, in one-letter code: DNA polymerase IV (356 aa).

The region spanning 6 to 187 (IIHIDMDAFY…QPIRRLHGVG (182 aa)) is the UmuC domain. Residues D10 and D105 each contribute to the Mg(2+) site. E106 is an active-site residue.

Belongs to the DNA polymerase type-Y family. In terms of assembly, monomer. Mg(2+) is required as a cofactor.

It is found in the cytoplasm. The catalysed reaction is DNA(n) + a 2'-deoxyribonucleoside 5'-triphosphate = DNA(n+1) + diphosphate. Functionally, poorly processive, error-prone DNA polymerase involved in untargeted mutagenesis. Copies undamaged DNA at stalled replication forks, which arise in vivo from mismatched or misaligned primer ends. These misaligned primers can be extended by PolIV. Exhibits no 3'-5' exonuclease (proofreading) activity. May be involved in translesional synthesis, in conjunction with the beta clamp from PolIII. This is DNA polymerase IV from Halorhodospira halophila (strain DSM 244 / SL1) (Ectothiorhodospira halophila (strain DSM 244 / SL1)).